Reading from the N-terminus, the 921-residue chain is Isoleucine--tRNA ligase (921 aa).

The 'HIGH' region motif lies at 57–67 (PYANGELHMGH). An L-isoleucyl-5'-AMP-binding site is contributed by E552. The 'KMSKS' region signature appears at 593 to 597 (KMSKS). K596 serves as a coordination point for ATP. C888, C891, C908, and C911 together coordinate Zn(2+).

It belongs to the class-I aminoacyl-tRNA synthetase family. IleS type 1 subfamily. In terms of assembly, monomer. It depends on Zn(2+) as a cofactor.

The protein resides in the cytoplasm. It carries out the reaction tRNA(Ile) + L-isoleucine + ATP = L-isoleucyl-tRNA(Ile) + AMP + diphosphate. Its function is as follows. Catalyzes the attachment of isoleucine to tRNA(Ile). As IleRS can inadvertently accommodate and process structurally similar amino acids such as valine, to avoid such errors it has two additional distinct tRNA(Ile)-dependent editing activities. One activity is designated as 'pretransfer' editing and involves the hydrolysis of activated Val-AMP. The other activity is designated 'posttransfer' editing and involves deacylation of mischarged Val-tRNA(Ile). This chain is Isoleucine--tRNA ligase, found in Listeria innocua serovar 6a (strain ATCC BAA-680 / CLIP 11262).